Consider the following 231-residue polypeptide: MNKKTKRMKKIKEHINFEKLHHIDETIDLLKKSSTVKFNESIDIAINLGINSKKSDQNIRSSTVLPNGIGRSIRVAVFTQGDNIAIAKDAGAELIGMEDLSEKIKKEGVDFDVVIATPDAMKIVTQLGQILGPRNLMPNTKLGTITTNIAEAIKNAKTGQVRYRNDKNGIIHATIGRINFHKNEIKENLNVFLESIKKAKPPQSKGIYIKKIVLSTTMGVGLMVDQSTLSL.

This sequence belongs to the universal ribosomal protein uL1 family. In terms of assembly, part of the 50S ribosomal subunit.

In terms of biological role, binds directly to 23S rRNA. The L1 stalk is quite mobile in the ribosome, and is involved in E site tRNA release. Functionally, protein L1 is also a translational repressor protein, it controls the translation of the L11 operon by binding to its mRNA. The chain is Large ribosomal subunit protein uL1 from Buchnera aphidicola subsp. Acyrthosiphon pisum (strain 5A).